Consider the following 122-residue polypeptide: Acidic phospholipase A2 Tpu-E6b (122 aa).

7 disulfide bridges follow: Cys26/Cys115, Cys28/Cys44, Cys43/Cys95, Cys49/Cys122, Cys50/Cys88, Cys57/Cys81, and Cys75/Cys86. Ca(2+) contacts are provided by Tyr27, Gly29, and Gly31. Residue His47 is part of the active site. Asp48 contributes to the Ca(2+) binding site. Asp89 is a catalytic residue.

In terms of assembly, monomer. It depends on Ca(2+) as a cofactor. As to expression, expressed by the venom gland.

The protein localises to the secreted. It catalyses the reaction a 1,2-diacyl-sn-glycero-3-phosphocholine + H2O = a 1-acyl-sn-glycero-3-phosphocholine + a fatty acid + H(+). Its function is as follows. Snake venom phospholipase A2 (PLA2) that weakly inhibits ADP-induced platelet aggregation when tested on platelet rich plasma from human and rabbit blood (15-25% of inhibition at 5-10 ug of enzyme). Exhibits moderate hydrolytic activities toward L-dipalmitoyl phosphatidylcholine. PLA2 catalyzes the calcium-dependent hydrolysis of the 2-acyl groups in 3-sn-phosphoglycerides. The polypeptide is Acidic phospholipase A2 Tpu-E6b (Craspedocephalus puniceus (Flat-nosed pitviper)).